We begin with the raw amino-acid sequence, 248 residues long: Isoprenyl transferase (248 aa).

The active site involves aspartate 28. Aspartate 28 contributes to the Mg(2+) binding site. Residues 29-32 (GNGR), tryptophan 33, arginine 41, histidine 45, and 73-75 (SSE) each bind substrate. Asparagine 76 (proton acceptor) is an active-site residue. Residues tryptophan 77, arginine 79, arginine 196, and 202–204 (RLS) each bind substrate. Mg(2+) is bound at residue glutamate 215.

This sequence belongs to the UPP synthase family. As to quaternary structure, homodimer. The cofactor is Mg(2+).

Its function is as follows. Catalyzes the condensation of isopentenyl diphosphate (IPP) with allylic pyrophosphates generating different type of terpenoids. This chain is Isoprenyl transferase, found in Zymomonas mobilis subsp. mobilis (strain ATCC 31821 / ZM4 / CP4).